A 360-amino-acid chain; its full sequence is Phospho-N-acetylmuramoyl-pentapeptide-transferase (360 aa).

10 consecutive transmembrane segments (helical) span residues 21-41 (YITFRSIMALLTALIIGLWIG), 73-93 (TMGGIMILFAIGVSTLLWADL), 98-118 (VWFVLFILFGYGVVGFVDDYW), 132-152 (WKYFWLSVIALVSAFGMYAIG), 168-188 (VMPQLGLFYIVLTYFVIVGTS), 199-219 (GLAIVPLIMVAGAFALIAWAT), 236-256 (SGELVILCTAIVGAGLGFLWF), 263-283 (VFMGDVGSLSLGGALGVIAVL), 288-308 (LLLVVMGGVFVVEALSVILQV), and 338-358 (VIVRFWIITLMLVLIGLVTLK).

The protein belongs to the glycosyltransferase 4 family. MraY subfamily. The cofactor is Mg(2+).

It localises to the cell inner membrane. It catalyses the reaction UDP-N-acetyl-alpha-D-muramoyl-L-alanyl-gamma-D-glutamyl-meso-2,6-diaminopimeloyl-D-alanyl-D-alanine + di-trans,octa-cis-undecaprenyl phosphate = di-trans,octa-cis-undecaprenyl diphospho-N-acetyl-alpha-D-muramoyl-L-alanyl-D-glutamyl-meso-2,6-diaminopimeloyl-D-alanyl-D-alanine + UMP. The protein operates within cell wall biogenesis; peptidoglycan biosynthesis. Catalyzes the initial step of the lipid cycle reactions in the biosynthesis of the cell wall peptidoglycan: transfers peptidoglycan precursor phospho-MurNAc-pentapeptide from UDP-MurNAc-pentapeptide onto the lipid carrier undecaprenyl phosphate, yielding undecaprenyl-pyrophosphoryl-MurNAc-pentapeptide, known as lipid I. The chain is Phospho-N-acetylmuramoyl-pentapeptide-transferase from Glaesserella parasuis serovar 5 (strain SH0165) (Haemophilus parasuis).